The primary structure comprises 433 residues: Histidine--tRNA ligase (433 aa).

The protein belongs to the class-II aminoacyl-tRNA synthetase family. Homodimer.

It is found in the cytoplasm. The enzyme catalyses tRNA(His) + L-histidine + ATP = L-histidyl-tRNA(His) + AMP + diphosphate + H(+). The polypeptide is Histidine--tRNA ligase (Azoarcus sp. (strain BH72)).